A 550-amino-acid chain; its full sequence is Glucose-6-phosphate isomerase (550 aa).

Catalysis depends on Glu-356, which acts as the Proton donor. Catalysis depends on residues His-387 and Lys-515.

It belongs to the GPI family.

It is found in the cytoplasm. The catalysed reaction is alpha-D-glucose 6-phosphate = beta-D-fructose 6-phosphate. The protein operates within carbohydrate biosynthesis; gluconeogenesis. It functions in the pathway carbohydrate degradation; glycolysis; D-glyceraldehyde 3-phosphate and glycerone phosphate from D-glucose: step 2/4. Catalyzes the reversible isomerization of glucose-6-phosphate to fructose-6-phosphate. The polypeptide is Glucose-6-phosphate isomerase (Photobacterium profundum (strain SS9)).